The primary structure comprises 76 residues: Small proline-rich protein 2G (76 aa).

Tandem repeats lie at residues 21-29 (PKCPEPCPL), 30-38 (PKCPEPCPP), and 39-47 (PKCPEPCPE). The interval 21-47 (PKCPEPCPLPKCPEPCPPPKCPEPCPE) is 3 X 9 AA approximate tandem repeats. Positions 55 to 76 (QQKCPPVQTPPPCQQKCPPKSK) are disordered.

This sequence belongs to the cornifin (SPRR) family. Expressed in uterus.

The protein resides in the cytoplasm. In terms of biological role, cross-linked envelope protein of keratinocytes. It is a keratinocyte protein that first appears in the cell cytosol, but ultimately becomes cross-linked to membrane proteins by transglutaminase. All that results in the formation of an insoluble envelope beneath the plasma membrane. The sequence is that of Small proline-rich protein 2G (Sprr2g) from Mus musculus (Mouse).